The sequence spans 162 residues: Cyclic pyranopterin monophosphate synthase (162 aa).

Substrate contacts are provided by residues 75–77 and 113–114; these read LCH and ME. Asp-128 is an active-site residue.

The protein belongs to the MoaC family. As to quaternary structure, homohexamer; trimer of dimers.

It catalyses the reaction (8S)-3',8-cyclo-7,8-dihydroguanosine 5'-triphosphate = cyclic pyranopterin phosphate + diphosphate. It participates in cofactor biosynthesis; molybdopterin biosynthesis. In terms of biological role, catalyzes the conversion of (8S)-3',8-cyclo-7,8-dihydroguanosine 5'-triphosphate to cyclic pyranopterin monophosphate (cPMP). This chain is Cyclic pyranopterin monophosphate synthase, found in Klebsiella pneumoniae subsp. pneumoniae (strain ATCC 700721 / MGH 78578).